Here is a 438-residue protein sequence, read N- to C-terminus: Myosin light chain kinase, smooth muscle (438 aa).

Residues Phe1–Leu241 enclose the Protein kinase domain. Lys15 is a binding site for ATP. A Phosphotyrosine; by ABL1 modification is found at Tyr97. The Proton acceptor role is filled by Asp107. Tyr157 is modified (phosphotyrosine; by ABL1). The interval Thr233–Thr296 is calmodulin-binding. Phosphoserine occurs at positions 281, 282, 294, 295, and 298. Residues Met283–Glu438 form a telokin region. Residues Leu289–Glu309 are disordered. Over residues Arg292–Leu303 the composition is skewed to polar residues. The residue at position 300 (Thr300) is a Phosphothreonine. Ser301 bears the Phosphoserine mark. The 90-residue stretch at Pro331–Ile420 folds into the Ig-like C2-type domain. A disulfide bridge connects residues Cys352 and Cys404.

This sequence belongs to the protein kinase superfamily. CAMK Ser/Thr protein kinase family. In terms of assembly, all isoforms including Telokin bind calmodulin. Interacts with SVIL. Interacts with CTTN; this interaction is reduced during thrombin-induced endothelial cell (EC) contraction but is promoted by the barrier-protective agonist sphingosine 1-phosphate (S1P) within lamellipodia. A complex made of ABL1, CTTN and MYLK regulates cortical actin-based cytoskeletal rearrangement critical to sphingosine 1-phosphate (S1P)-mediated endothelial cell (EC) barrier enhancement. Binds to NAA10/ARD1 and PTK2B/PYK2. Requires Mg(2+) as cofactor. It depends on Ca(2+) as a cofactor. In terms of processing, the C-terminus is deglutamylated by AGTPBP1/CCP1, AGBL1/CCP4 and AGBL4/CCP6, leading to the formation of Myosin light chain kinase, smooth muscle, deglutamylated form. The consequences of C-terminal deglutamylation are unknown. Post-translationally, can probably be down-regulated by phosphorylation. Tyrosine phosphorylation by ABL1 increases kinase activity, reverses MLCK-mediated inhibition of Arp2/3-mediated actin polymerization, and enhances CTTN-binding. Phosphorylation by SRC promotes CTTN binding.

It localises to the cytoplasm. The protein resides in the cell projection. Its subcellular location is the lamellipodium. It is found in the cleavage furrow. The protein localises to the cytoskeleton. It localises to the stress fiber. The enzyme catalyses L-seryl-[myosin light chain] + ATP = O-phospho-L-seryl-[myosin light chain] + ADP + H(+). It carries out the reaction L-threonyl-[myosin light chain] + ATP = O-phospho-L-threonyl-[myosin light chain] + ADP + H(+). Its function is as follows. Calcium/calmodulin-dependent myosin light chain kinase implicated in smooth muscle contraction via phosphorylation of myosin light chains (MLC). Also regulates actin-myosin interaction through a non-kinase activity. Phosphorylates PTK2B/PYK2 and myosin light-chains. Involved in the inflammatory response (e.g. apoptosis, vascular permeability, leukocyte diapedesis), cell motility and morphology, airway hyperreactivity and other activities relevant to asthma. Required for tonic airway smooth muscle contraction that is necessary for physiological and asthmatic airway resistance. Necessary for gastrointestinal motility. Implicated in the regulation of endothelial as well as vascular permeability, probably via the regulation of cytoskeletal rearrangements. In the nervous system it has been shown to control the growth initiation of astrocytic processes in culture and to participate in transmitter release at synapses formed between cultured sympathetic ganglion cells. Critical participant in signaling sequences that result in fibroblast apoptosis. Plays a role in the regulation of epithelial cell survival. Required for epithelial wound healing, especially during actomyosin ring contraction during purse-string wound closure. Mediates RhoA-dependent membrane blebbing. Triggers TRPC5 channel activity in a calcium-dependent signaling, by inducing its subcellular localization at the plasma membrane. Promotes cell migration (including tumor cells) and tumor metastasis. PTK2B/PYK2 activation by phosphorylation mediates ITGB2 activation and is thus essential to trigger neutrophil transmigration during acute lung injury (ALI). May regulate optic nerve head astrocyte migration. Probably involved in mitotic cytoskeletal regulation. Regulates tight junction probably by modulating ZO-1 exchange in the perijunctional actomyosin ring. Mediates burn-induced microvascular barrier injury; triggers endothelial contraction in the development of microvascular hyperpermeability by phosphorylating MLC. Essential for intestinal barrier dysfunction. Mediates Giardia spp.-mediated reduced epithelial barrier function during giardiasis intestinal infection via reorganization of cytoskeletal F-actin and tight junctional ZO-1. Necessary for hypotonicity-induced Ca(2+) entry and subsequent activation of volume-sensitive organic osmolyte/anion channels (VSOAC) in cervical cancer cells. The chain is Myosin light chain kinase, smooth muscle (MYLK) from Ovis aries (Sheep).